The chain runs to 85 residues: U4-theraphotoxin-Hhn1g (85 aa).

Positions 1 to 22 (MKVTLIAILTCAAVLVLHTTAA) are cleaved as a signal peptide. The propeptide occupies 23–48 (EELEAESQLMEVGMPDTELAAVDEER). Disulfide bonds link C52–C66, C56–C77, and C71–C82.

Belongs to the neurotoxin 12 (Hwtx-2) family. 02 (Hwtx-2) subfamily. Expressed by the venom gland.

The protein resides in the secreted. In terms of biological role, postsynaptic neurotoxin. This is U4-theraphotoxin-Hhn1g from Cyriopagopus hainanus (Chinese bird spider).